The chain runs to 238 residues: uncharacterized protein (238 aa).

This is an uncharacterized protein from Methanocaldococcus jannaschii (strain ATCC 43067 / DSM 2661 / JAL-1 / JCM 10045 / NBRC 100440) (Methanococcus jannaschii).